Reading from the N-terminus, the 424-residue chain is WD-40 repeat-containing protein MSI3 (424 aa).

Methionine 1 carries the N-acetylmethionine modification. WD repeat units follow at residues 167–207 (GHEQ…TDKV), 216–256 (GHQS…MQHQ), 259–299 (VHER…APLH), 303–343 (KHEG…DEQL), and 362–402 (GHKA…YRED). Residues 233–249 (IFGSAGDDCQLVIWDLR) carry the DWD box motif. The segment at 394–424 (MAESIYREDDEDEDDDDEGNQNAQHSNENQK) is disordered. Over residues 401-412 (EDDEDEDDDDEG) the composition is skewed to acidic residues. A compositionally biased stretch (polar residues) spans 413–424 (NQNAQHSNENQK).

The protein belongs to the WD repeat RBAP46/RBAP48/MSI1 family.

It localises to the nucleus. Core histone-binding subunit that may target chromatin assembly factors, chromatin remodeling factors and histone deacetylases to their histone substrates in a manner that is regulated by nucleosomal DNA. This Arabidopsis thaliana (Mouse-ear cress) protein is WD-40 repeat-containing protein MSI3 (MSI3).